We begin with the raw amino-acid sequence, 251 residues long: Coproheme decarboxylase (251 aa).

Fe-coproporphyrin III contacts are provided by residues Arg-133, 147–151 (YPMSK), His-174, Gln-187, and Ser-225. Residue Tyr-147 is part of the active site.

Belongs to the ChdC family. Type 1 subfamily. Fe-coproporphyrin III serves as cofactor.

It carries out the reaction Fe-coproporphyrin III + 2 H2O2 + 2 H(+) = heme b + 2 CO2 + 4 H2O. It catalyses the reaction Fe-coproporphyrin III + H2O2 + H(+) = harderoheme III + CO2 + 2 H2O. The enzyme catalyses harderoheme III + H2O2 + H(+) = heme b + CO2 + 2 H2O. It functions in the pathway porphyrin-containing compound metabolism; protoheme biosynthesis. Involved in coproporphyrin-dependent heme b biosynthesis. Catalyzes the decarboxylation of Fe-coproporphyrin III (coproheme) to heme b (protoheme IX), the last step of the pathway. The reaction occurs in a stepwise manner with a three-propionate intermediate. In Listeria monocytogenes serotype 4a (strain HCC23), this protein is Coproheme decarboxylase.